The following is a 512-amino-acid chain: Retinaldehyde dehydrogenase 3 (512 aa).

Residues 1–22 (MATANGAVENGQPDRKPPALPR) form a disordered region. At alanine 2 the chain carries N-acetylalanine. NAD(+)-binding positions include lysine 204, glutamate 207, and 257 to 262 (GSTEVG). Glutamate 280 (proton acceptor) is an active-site residue. The active-site Nucleophile is the cysteine 314. Residues glutamine 361 and glutamate 411 each contribute to the NAD(+) site.

Belongs to the aldehyde dehydrogenase family. As to quaternary structure, homotetramer. As to expression, expressed at low levels in many tissues and at higher levels in salivary gland, stomach, and kidney.

It is found in the cytoplasm. The catalysed reaction is all-trans-retinal + NAD(+) + H2O = all-trans-retinoate + NADH + 2 H(+). It carries out the reaction retinal + NAD(+) + H2O = retinoate + NADH + 2 H(+). The enzyme catalyses all-trans-13,14-dihydroretinal + NAD(+) + H2O = all-trans-13,14-dihydroretinoate + NADH + 2 H(+). It functions in the pathway cofactor metabolism; retinol metabolism. Catalyzes the NAD-dependent oxidation of aldehyde substrates, such as all-trans-retinal and all-trans-13,14-dihydroretinal, to their corresponding carboxylic acids, all-trans-retinoate and all-trans-13,14-dihydroretinoate, respectively. High specificity for all-trans-retinal as substrate, can also accept acetaldehyde as substrate in vitro but with lower affinity. Required for the biosynthesis of normal levels of retinoate in the embryonic ocular and nasal regions; a critical lipid in the embryonic development of the eye and the nasal region. This chain is Retinaldehyde dehydrogenase 3 (ALDH1A3), found in Homo sapiens (Human).